The primary structure comprises 367 residues: Peptide chain release factor 1 (367 aa).

At Gln243 the chain carries N5-methylglutamine.

The protein belongs to the prokaryotic/mitochondrial release factor family. Post-translationally, methylated by PrmC. Methylation increases the termination efficiency of RF1.

It is found in the cytoplasm. Functionally, peptide chain release factor 1 directs the termination of translation in response to the peptide chain termination codons UAG and UAA. The chain is Peptide chain release factor 1 from Acidovorax sp. (strain JS42).